A 598-amino-acid polypeptide reads, in one-letter code: Aspartate--tRNA(Asp/Asn) ligase (598 aa).

Position 175 (E175) interacts with L-aspartate. The tract at residues 199 to 202 (QQFK) is aspartate. L-aspartate is bound by residues R221 and H452. Residue 221–223 (RDE) participates in ATP binding. ATP is bound at residue E486. An L-aspartate-binding site is contributed by R493. 538–541 (GVDR) contributes to the ATP binding site.

It belongs to the class-II aminoacyl-tRNA synthetase family. Type 1 subfamily. In terms of assembly, homodimer.

Its subcellular location is the cytoplasm. The enzyme catalyses tRNA(Asx) + L-aspartate + ATP = L-aspartyl-tRNA(Asx) + AMP + diphosphate. Its function is as follows. Aspartyl-tRNA synthetase with relaxed tRNA specificity since it is able to aspartylate not only its cognate tRNA(Asp) but also tRNA(Asn). Reaction proceeds in two steps: L-aspartate is first activated by ATP to form Asp-AMP and then transferred to the acceptor end of tRNA(Asp/Asn). This Gluconobacter oxydans (strain 621H) (Gluconobacter suboxydans) protein is Aspartate--tRNA(Asp/Asn) ligase.